The sequence spans 62 residues: Pro-MCH variant (62 aa).

Residues 23-41 are NGE-like; the sequence is GSVAFPAENGVQDTESTQE. A disordered region spans residues 28–62; it reads PAENGVQDTESTQEKRETGDEENSAQFPIGRRDFD. The segment at 44-56 is NEI-like; the sequence is ETGDEENSAQFPI. The tract at residues 60–62 is melanin-concentrating hormone-like; it reads DFD.

It belongs to the melanin-concentrating hormone family.

The chain is Pro-MCH variant (PMCHL1) from Hylobates lar (Lar gibbon).